A 1248-amino-acid polypeptide reads, in one-letter code: MEFIPTQTFYNRRYQPRPWTPRPTIQVIRPRPRPQRQAGQLAQLISAVNKLTMRAVPQQKPRRNRKNKKQKQKQQAPQNNTNQKKQPPKKKPAQKKKKPGRRERMCMKIENDCIFEVKHEGKVTGYACLVGDKVMKPAHVKGTIDNADLAKLAFKRSSKYDLECAQIPVHMKSDASKFTHEKPEGYYNWHHGAVQYSGGRFTIPTGAGKPGDSGRPIFDNKGRVVAIVLGGANEGARTALSVVTWNKDIVTKITPEGAEEWSLAIPVMCLLANTTFPCSQPPCIPCCYEKEPEETLRMLEDNVMRPGYYQLLQASLTCSPHRQRRSTKDNFNVYKATRPYLAHCPDCGEGHSCHSPVALERIRNEATDGTLKIQVSLQIGIGTDDSHDWTKLRYMDNHIPADAGRAGLFVRTSAPCTITGTMGHFILARCPKGETLTVGFTDSRKISHSCTHPFHHDPPVIGREKFHSRPQHGKELPCSTYVQSNAATAEEIEVHMPPDTPDRTLLSQQSGNVKITVNGRTVRYKCNCGGSNEGLITTDKVINNCKVDQCHAAVTNHKKWQYNSPLVPRNAELGDRKGKIHIPFPLANVTCMVPKARNPTVTYGKNQVIMLLYPDHPTLLSYRSMGEEPNYQEEWVTHKKEVVLTVPTEGLEVTWGNNEPYKYWPQLSANGTAHGHPHEIILYYYELYPTMTVVVVSVASFILLSMVGMAVGMCMCARRRCITPYELTPGATVPFLLSLICCIRTAKAATYQEAAVYLWNEQQPLFWLQALIPLAALIVLCNCLRLLPCCCKTLAFLAVMSIGAHTVSAYEHVTVIPNTVGVPYKTLVNRPGYSPMVLEMELLSVTLEPTLSLDYITCEYKTVIPSPYVKCCGTAECKDKNLPDYSCKVFTGVYPFMWGGAYCFCDAENTQLSEAHVEKSESCKTEFASAYRAHTASASAKLRVLYQGNNITVTAYANGDHAVTVKDAKFIVGPMSSAWTPFDNKIVVYKGDVYNMDYPPFGAGRPGQFGDIQSRTPESKDVYANTQLVLQRPAAGTVHVPYSQAPSGFKYWLKERGASLQHTAPFGCQIATNPVRAMNCAVGNMPISIDIPDAAFTRVVDAPSLTDMSCEVPACTHSSDFGGVAIIKYAVSKKGKCAVHSMTNAVTIREAEIEVEGNSQLQISFSTALASAEFRVQVCSTQVHCAAECHPPKDHIVNYPASHTTLGVQDISATAMSWVQKITGGVGLVVAVAALILIVVLCVSFSRH.

The span at 1–10 (MEFIPTQTFY) shows a compositional bias: polar residues. A disordered region spans residues 1–104 (MEFIPTQTFY…KKKKPGRRER (104 aa)). The span at 22–44 (RPTIQVIRPRPRPQRQAGQLAQL) shows a compositional bias: low complexity. Residues 36-68 (RQAGQLAQLISAVNKLTMRAVPQQKPRRNRKNK) are host transcription inhibition. The span at 60–72 (KPRRNRKNKKQKQ) shows a compositional bias: basic residues. The Nuclear localization signal motif lies at 61–99 (PRRNRKNKKQKQKQQAPQNNTNQKKQPPKKKPAQKKKKP). Positions 73-85 (KQQAPQNNTNQKK) are enriched in low complexity. The interval 84–114 (KKQPPKKKPAQKKKKPGRRERMCMKIENDCI) is binding to the viral RNA. Residues 86 to 101 (QPPKKKPAQKKKKPGR) are compositionally biased toward basic residues. Positions 99–113 (PGRRERMCMKIENDC) are ribosome-binding. A disulfide bridge connects residues Cys-113 and Cys-128. A Peptidase S3 domain is found at 113-261 (CIFEVKHEGK…KITPEGAEEW (149 aa)). The Charge relay system role is filled by His-139. The Nuclear export signal signature appears at 144–154 (IDNADLAKLAF). Residues 155-160 (KRSSKY) are interaction with spike glycoprotein E2. The active-site Charge relay system is Asp-161. Positions 183 to 193 (PEGYYNWHHGA) are dimerization of the capsid protein. The Charge relay system role is filled by Ser-213. Positions 219-223 (DNKGR) are dimerization of the capsid protein. Residues 262-274 (SLAIPVMCLLANT) form a functions as an uncleaved signal peptide for the precursor of protein E3/E2 region. Topologically, residues 262-692 (SLAIPVMCLL…YYYELYPTMT (431 aa)) are extracellular. 9 disulfides stabilise this stretch: Cys-269–Cys-278, Cys-283–Cys-287, Cys-286–Cys-318, Cys-344–Cys-450, Cys-347–Cys-353, Cys-416–Cys-430, Cys-478–Cys-591, Cys-526–Cys-550, and Cys-528–Cys-545. Asn-273 carries an N-linked (GlcNAc...) asparagine; by host glycan. Interaction with host Mxra8 receptor stretches follow at residues 351-354 (HSCH) and 387-389 (HDW). 2 interaction with host Mxra8 receptor regions span residues 509–512 (QSGN) and 541–547 (VINNCKV). N-linked (GlcNAc...) asparagine; by host glycosylation is found at Asn-588 and Asn-670. Residues 693 to 713 (VVVVSVASFILLSMVGMAVGM) form a helical membrane-spanning segment. Residues 714-748 (CMCARRRCITPYELTPGATVPFLLSLICCIRTAKA) lie on the Cytoplasmic side of the membrane. Residues 716-720 (CARRR) are interaction with the capsid protein. Residues Cys-721, Cys-741, and Cys-742 are each lipidated (S-palmitoyl cysteine; by host). A transient transmembrane before p62-6K protein processing region spans residues 721–741 (CITPYELTPGATVPFLLSLIC). A disulfide bridge links Cys-721 with Cys-742. At 749–763 (ATYQEAAVYLWNEQQ) the chain is on the extracellular side. A helical membrane pass occupies residues 764–784 (PLFWLQALIPLAALIVLCNCL). Over 785 to 795 (RLLPCCCKTLA) the chain is Cytoplasmic. A helical membrane pass occupies residues 796 to 816 (FLAVMSIGAHTVSAYEHVTVI). The Extracellular portion of the chain corresponds to 817-1224 (PNTVGVPYKT…AMSWVQKITG (408 aa)). 4 cysteine pairs are disulfide-bonded: Cys-858–Cys-923, Cys-871–Cys-903, Cys-872–Cys-905, and Cys-877–Cys-887. The interval 893-910 (VYPFMWGGAYCFCDAENT) is E1 fusion peptide loop. Asn-950 and Asn-1079 each carry an N-linked (GlcNAc...) asparagine; by host glycan. 4 cysteine pairs are disulfide-bonded: Cys-1068–Cys-1080, Cys-1110–Cys-1185, Cys-1115–Cys-1189, and Cys-1137–Cys-1179. The chain crosses the membrane as a helical span at residues 1225–1245 (GVGLVVAVAALILIVVLCVSF). A lipid anchor (S-palmitoyl cysteine; by host) is attached at Cys-1242. Residue Cys-1242 is the site of S-stearoyl cysteine; by host attachment. Residues 1246–1248 (SRH) are Cytoplasmic-facing.

Belongs to the alphavirus structural polyprotein family. As to quaternary structure, homodimer. Homomultimer. Interacts with host karyopherin KPNA4; this interaction allows the nuclear import of the viral capsid protein. Interacts with spike glycoprotein E2. Interacts with host IRAK1; the interaction leads to inhibition of IRAK1-dependent signaling. In terms of assembly, the precursor of protein E3/E2 and E1 form a heterodimer shortly after synthesis. Interacts with spike glycoprotein E2. The precursor of protein E3/E2 and E1 form a heterodimer shortly after synthesis. Processing of the precursor of protein E3/E2 into E2 and E3 results in a heterodimer of the spike glycoproteins E2 and E1. Spike at virion surface are constituted of three E2-E1 heterodimers. After target cell attachment and endocytosis, E1 changes conformation to form homotrimers. Interacts with 6K protein. Interacts with host MXRA8; this interaction mediates virus entry. The interaction involves 2 adjacent E2-E1 heterodimers. As to quaternary structure, interacts with spike glycoprotein E1. Processing of the precursor of protein E3/E2 into E2 and E3 results in a heterodimer of the spike glycoproteins E2 and E1. Spike at virion surface are constituted of a trimer of E2-E1 heterodimers. Interacts with 6K protein. Interacts with host MXRA8; this interaction mediates virus entry. The interaction involves 2 adjacent E2-E1 heterodimers. In terms of assembly, oligomer. Interacts with spike glycoprotein E1. Interacts with spike glycoprotein E2. Post-translationally, specific enzymatic cleavages in vivo yield mature proteins. Capsid protein is auto-cleaved during polyprotein translation, unmasking a signal peptide at the N-terminus of the precursor of E3/E2. The remaining polyprotein is then targeted to the host endoplasmic reticulum, where host signal peptidase cleaves it into pE2, 6K and E1 proteins. pE2 is further processed to mature E3 and E2 by host furin in trans-Golgi vesicle. Palmitoylated via thioester bonds. These palmitoylations may induce disruption of the C-terminus transmembrane. This would result in the reorientation of E2 C-terminus from lumenal to cytoplasmic side. In terms of processing, N-glycosylated. Post-translationally, palmitoylated via thioester bonds.

It localises to the virion. The protein localises to the host cytoplasm. It is found in the host cell membrane. The protein resides in the host nucleus. Its subcellular location is the virion membrane. It localises to the host Golgi apparatus. The protein localises to the host trans-Golgi network. It is found in the host endoplasmic reticulum. It carries out the reaction Autocatalytic release of the core protein from the N-terminus of the togavirus structural polyprotein by hydrolysis of a -Trp-|-Ser- bond.. Its function is as follows. Forms an icosahedral capsid with a T=4 symmetry composed of 240 copies of the capsid protein surrounded by a lipid membrane through which penetrate 80 spikes composed of trimers of E1-E2 heterodimers. The capsid protein binds to the viral RNA genome at a site adjacent to a ribosome binding site for viral genome translation following genome release. Possesses a protease activity that results in its autocatalytic cleavage from the nascent structural protein. Following its self-cleavage, the capsid protein transiently associates with ribosomes, and within several minutes the protein binds to viral RNA and rapidly assembles into icosahedric core particles. The resulting nucleocapsid eventually associates with the cytoplasmic domain of the spike glycoprotein E2 at the cell membrane, leading to budding and formation of mature virions. In case of infection, new virions attach to target cells and after clathrin-mediated endocytosis their membrane fuses with the host endosomal membrane. This leads to the release of the nucleocapsid into the cytoplasm, followed by an uncoating event necessary for the genomic RNA to become accessible. The uncoating might be triggered by the interaction of capsid proteins with ribosomes. Binding of ribosomes would release the genomic RNA since the same region is genomic RNA-binding and ribosome-binding. Specifically inhibits interleukin-1 receptor-associated kinase 1/IRAK1-dependent signaling during viral entry, representing a means by which the alphaviruses may evade innate immune detection and activation prior to viral gene expression. Degrades host cyclic GMP-AMP synthase (CGAS) thereby inhibiting the cGAS-STING pathway. Functionally, provides the signal sequence for the translocation of the precursor of protein E3/E2 to the host endoplasmic reticulum. Furin-cleaved E3 remains associated with spike glycoprotein E1 and mediates pH protection of the latter during the transport via the secretory pathway. After virion release from the host cell, the assembly protein E3 is gradually released in the extracellular space. In terms of biological role, plays a role in viral attachment to target host cell, by binding to the cell receptor MXRA8. Synthesized as a p62 precursor which is processed by furin at the cell membrane just before virion budding, giving rise to E2-E1 heterodimer. The p62-E1 heterodimer is stable, whereas E2-E1 is unstable and dissociate at low pH. p62 is processed at the last step, presumably to avoid E1 fusion activation before its final export to cell surface. E2 C-terminus contains a transitory transmembrane that would be disrupted by palmitoylation, resulting in reorientation of the C-terminal tail from lumenal to cytoplasmic side. This step is critical since E2 C-terminus is involved in budding by interacting with capsid proteins. This release of E2 C-terminus in cytoplasm occurs lately in protein export, and precludes premature assembly of particles at the endoplasmic reticulum membrane. Acts as a viroporin that participates in virus glycoprotein processing and transport to the plasma membrane, cell permeabilization and budding of viral particles. Disrupts the calcium homeostasis of the cell, probably at the endoplasmic reticulum level. This leads to cytoplasmic calcium elevation. Because of its lipophilic properties, the 6K protein is postulated to influence the selection of lipids that interact with the transmembrane domains of the glycoproteins, which, in turn, affects the deformability of the bilayer required for the extreme curvature that occurs as budding proceeds. Present in low amount in virions, about 3% compared to viral glycoproteins. Its function is as follows. Class II viral fusion protein. Fusion activity is inactive as long as E1 is bound to E2 in mature virion. After virus attachment to target cell and endocytosis, acidification of the endosome induce dissociation of E1/E2 heterodimer and concomitant trimerization of the E1 subunits. This E1 trimer is fusion active, and promotes release of viral nucleocapsid in cytoplasm after endosome and viral membrane fusion. Efficient fusion requires the presence of cholesterol and sphingolipid in the target membrane. The protein is Structural polyprotein of Chikungunya virus (strain S27-African prototype) (CHIKV).